The primary structure comprises 103 residues: Small ribosomal subunit protein uS10 (103 aa).

The protein belongs to the universal ribosomal protein uS10 family. In terms of assembly, part of the 30S ribosomal subunit.

Functionally, involved in the binding of tRNA to the ribosomes. This chain is Small ribosomal subunit protein uS10, found in Mycoplasmopsis pulmonis (strain UAB CTIP) (Mycoplasma pulmonis).